Here is a 376-residue protein sequence, read N- to C-terminus: Chaperone protein DnaJ (376 aa).

In terms of domain architecture, J spans 5–70 (DYYEVLGVGR…DKKAAYDQFG (66 aa)). The CR-type zinc-finger motif lies at 132–210 (GLTKELKVPT…CHGNGRVEKT (79 aa)). C145, C148, C162, C165, C184, C187, C198, and C201 together coordinate Zn(2+). CXXCXGXG motif repeat units lie at residues 145-152 (CDSCDGSG), 162-169 (CGTCHGMG), 184-191 (CPTCHGRG), and 198-205 (CSKCHGNG).

The protein belongs to the DnaJ family. In terms of assembly, homodimer. Zn(2+) serves as cofactor.

It is found in the cytoplasm. Participates actively in the response to hyperosmotic and heat shock by preventing the aggregation of stress-denatured proteins and by disaggregating proteins, also in an autonomous, DnaK-independent fashion. Unfolded proteins bind initially to DnaJ; upon interaction with the DnaJ-bound protein, DnaK hydrolyzes its bound ATP, resulting in the formation of a stable complex. GrpE releases ADP from DnaK; ATP binding to DnaK triggers the release of the substrate protein, thus completing the reaction cycle. Several rounds of ATP-dependent interactions between DnaJ, DnaK and GrpE are required for fully efficient folding. Also involved, together with DnaK and GrpE, in the DNA replication of plasmids through activation of initiation proteins. The polypeptide is Chaperone protein DnaJ (Shewanella amazonensis (strain ATCC BAA-1098 / SB2B)).